Here is a 199-residue protein sequence, read N- to C-terminus: Photosystem I reaction center subunit XI (199 aa).

Transmembrane regions (helical) follow at residues 108-128 and 165-185; these read LTAG…LFVL and FWLG…TLHL.

This sequence belongs to the PsaL family.

It localises to the cellular thylakoid membrane. This Prochlorococcus marinus (strain MIT 9301) protein is Photosystem I reaction center subunit XI.